Here is a 449-residue protein sequence, read N- to C-terminus: Putative transporter C83.11 (449 aa).

A run of 9 helical transmembrane segments spans residues 7–27 (LSHI…LWYI), 47–67 (VTLT…CLLF), 84–104 (VLYT…FGSL), 109–129 (IPVS…VLAY), 136–156 (VYSA…TLAC), 164–184 (IVGL…NIFG), 205–225 (LNLL…VWLY), 255–275 (ILAF…ASLI), and 278–298 (IFVI…TQGS). Phosphoserine is present on residues Ser-348 and Ser-352. Tyr-355 is subject to Phosphotyrosine. A compositionally biased stretch (polar residues) spans 382–415 (NSVYSNEGVTSSVSGNATPASVRQSTQNDFSNSN). Positions 382-416 (NSVYSNEGVTSSVSGNATPASVRQSTQNDFSNSNI) are disordered.

This sequence belongs to the TPT transporter family.

Its subcellular location is the membrane. This Schizosaccharomyces pombe (strain 972 / ATCC 24843) (Fission yeast) protein is Putative transporter C83.11.